The primary structure comprises 239 residues: MEIFPAIDLKEGRCVRLYQGEFSKETVMNEDPVAQAIIFEKFGAKRLHIVDLDGAVAGESLNLSVIERICKAVRIPVQVGGGIRSLVAVEKLFSVGVDKVILGTAALYDKTFLEEAVLLYKEKIIVGIDAKNGFVATRGWLDVSEISYIDLAKQMEKIGVQTIVFTDISKDGTLGGPNVEQLELLQKSVAIRLIASGGVASIQDVKKLNDMNIYGVIIGKALYEKTIDLEEVLEVTKLC.

The Proton acceptor role is filled by aspartate 8. Aspartate 129 (proton donor) is an active-site residue.

The protein belongs to the HisA/HisF family.

Its subcellular location is the cytoplasm. The enzyme catalyses 1-(5-phospho-beta-D-ribosyl)-5-[(5-phospho-beta-D-ribosylamino)methylideneamino]imidazole-4-carboxamide = 5-[(5-phospho-1-deoxy-D-ribulos-1-ylimino)methylamino]-1-(5-phospho-beta-D-ribosyl)imidazole-4-carboxamide. It participates in amino-acid biosynthesis; L-histidine biosynthesis; L-histidine from 5-phospho-alpha-D-ribose 1-diphosphate: step 4/9. This chain is 1-(5-phosphoribosyl)-5-[(5-phosphoribosylamino)methylideneamino] imidazole-4-carboxamide isomerase, found in Bacillus cereus (strain AH820).